The sequence spans 357 residues: S-adenosyl-L-methionine:benzoic acid/salicylic acid carboxyl methyltransferase 2 (357 aa).

Position 18 (Tyr-18) interacts with S-adenosyl-L-homocysteine. Gln-25 serves as a coordination point for benzoate. Residues Cys-59, Asn-64, Asp-96, Leu-97, Ser-135, and Phe-136 each contribute to the S-adenosyl-L-homocysteine site. Benzoate is bound at residue Trp-157. Mg(2+) is bound by residues Asn-168, Asp-254, Phe-256, and Asn-257. Residue Gln-260 participates in benzoate binding.

This sequence belongs to the methyltransferase superfamily. Type-7 methyltransferase family. Predominantly expressed in petal limbs and tubes of corollas.

It carries out the reaction benzoate + S-adenosyl-L-methionine = methyl benzoate + S-adenosyl-L-homocysteine. The catalysed reaction is salicylate + S-adenosyl-L-methionine = methyl salicylate + S-adenosyl-L-homocysteine. It functions in the pathway aromatic compound metabolism. Converts benzoic acid into the volatile ester methyl benzoates. This scent, mostly produced in a rhythmical, diurnal manner, attracts the pollinators. The chain is S-adenosyl-L-methionine:benzoic acid/salicylic acid carboxyl methyltransferase 2 from Petunia hybrida (Petunia).